Reading from the N-terminus, the 315-residue chain is ADP/ATP translocase 4 (315 aa).

Residues 1–19 lie on the Mitochondrial intermembrane side of the membrane; sequence MHREPAKKKAEKRLFDASS. A Solcar 1 repeat occupies 18–110; the sequence is SSFGKDLLAG…FAFKDKYKQL (93 aa). The helical transmembrane segment at 20–49 threads the bilayer; it reads FGKDLLAGGVAAAVSKTAVAPIERVKLLLQ. Residues 50–86 are Mitochondrial matrix-facing; sequence VQASSKQISPEARYKGMVDCLVRIPREQGFFSFWRGN. Residues 87–111 form a helical membrane-spanning segment; the sequence is LANVIRYFPTQALNFAFKDKYKQLF. ADP is bound by residues R92 and K104. Residues 112 to 121 are Mitochondrial intermembrane-facing; the sequence is MSGVNKEKQF. A helical transmembrane segment spans residues 122–142; the sequence is WRWFLANLASGGAAGATSLCV. Solcar repeat units lie at residues 123–213 and 220–307; these read RWFL…VKGL and TPFL…IKEF. Topologically, residues 143–190 are mitochondrial matrix; it reads VYPLDFARTRLGVDIGKGPEERQFKGLGDCIMKIAKSDGIAGLYQGFG. Residues 191-211 traverse the membrane as a helical segment; the sequence is VSVQGIIVYRASYFGAYDTVK. At 212–222 the chain is on the mitochondrial intermembrane side; it reads GLLPKPKKTPF. The helical transmembrane segment at 223 to 243 threads the bilayer; it reads LVSFFIAQVVTTCSGILSYPF. The Mitochondrial matrix segment spans residues 244–283; that stretch reads DTVRRRMMMQSGEAKRQYKGTLDCFVKIYQHEGISSFFRG. R247 serves as a coordination point for ADP. The tract at residues 247–252 is important for transport activity; it reads RRRMMM. The Nucleotide carrier signature motif motif lies at 247–252; that stretch reads RRRMMM. The helical transmembrane segment at 284–301 threads the bilayer; it reads AFSNVLRGTGGALVLVLY. The Mitochondrial intermembrane portion of the chain corresponds to 302–315; sequence DKIKEFFHIDIGGR.

It belongs to the mitochondrial carrier (TC 2.A.29) family. Monomer. In terms of tissue distribution, expressed in brain, liver, sperm and testis. In testis, expressed at higher level in spermatocytes, while it is expressed at lower level in spermatogonial cells. Expressed in erythrocytes (at protein level).

It is found in the mitochondrion inner membrane. Its subcellular location is the membrane. The protein localises to the cell projection. The protein resides in the cilium. It localises to the flagellum membrane. It catalyses the reaction ADP(in) + ATP(out) = ADP(out) + ATP(in). The catalysed reaction is dATP(out) + ADP(in) = dATP(in) + ADP(out). It carries out the reaction dADP(in) + ADP(out) = dADP(out) + ADP(in). The enzyme catalyses H(+)(in) = H(+)(out). Its activity is regulated as follows. The matrix-open state (m-state) is inhibited by the membrane-permeable bongkrekic acid (BKA). The cytoplasmic-open state (c-state) is inhibited by the membrane-impermeable toxic inhibitor carboxyatractyloside (CATR). Proton transporter activity is inhibited by ADP:ATP antiporter activity. ADP:ATP antiporter that mediates import of ADP into the mitochondrial matrix for ATP synthesis, and export of ATP out to fuel the cell. Cycles between the cytoplasmic-open state (c-state) and the matrix-open state (m-state): operates by the alternating access mechanism with a single substrate-binding site intermittently exposed to either the cytosolic (c-state) or matrix (m-state) side of the inner mitochondrial membrane. Specifically required during spermatogenesis, probably to mediate ADP:ATP exchange in spermatocytes. Large ATP supplies from mitochondria may be critical for normal progression of spermatogenesis during early stages of meiotic prophase I, including DNA double-strand break repair and chromosomal synapsis. In addition to its ADP:ATP antiporter activity, also involved in mitochondrial uncoupling and mitochondrial permeability transition pore (mPTP) activity. Plays a role in mitochondrial uncoupling by acting as a proton transporter: proton transport uncouples the proton flows via the electron transport chain and ATP synthase to reduce the efficiency of ATP production and cause mitochondrial thermogenesis. Proton transporter activity is inhibited by ADP:ATP antiporter activity, suggesting that SLC25A31/ANT4 acts as a master regulator of mitochondrial energy output by maintaining a delicate balance between ATP production (ADP:ATP antiporter activity) and thermogenesis (proton transporter activity). Proton transporter activity requires free fatty acids as cofactor, but does not transport it. Among nucleotides, may also exchange ADP for dATP and dADP. Also plays a key role in mPTP opening, a non-specific pore that enables free passage of the mitochondrial membranes to solutes of up to 1.5 kDa, and which contributes to cell death. It is however unclear if SLC25A31/ANT4 constitutes a pore-forming component of mPTP or regulates it. In Homo sapiens (Human), this protein is ADP/ATP translocase 4.